Reading from the N-terminus, the 104-residue chain is Membrane magnesium transporter (104 aa).

Residues 1 to 2 (MN) lie on the Cytoplasmic side of the membrane. A helical transmembrane segment spans residues 3–23 (LGFLVGVFGVLILSHAAYSTI). Residues 24 to 40 (QYRGLLKIMEEEFSRPP) are Lumenal-facing. Residues 41-61 (INVILELIIGLALCMWAALTF) form a helical membrane-spanning segment. Topologically, residues 62-104 (PGKFLSIHPDSDENRAVFLPDNSDFMIFNHRGRLFPPQIDMKF) are cytoplasmic.

This sequence belongs to the membrane magnesium transporter (TC 1.A.67) family. Component of the ER membrane protein complex (EMC).

The protein localises to the endoplasmic reticulum membrane. It is found in the golgi apparatus membrane. Its subcellular location is the early endosome membrane. In terms of biological role, mediates Mg(2+) transport. This Arabidopsis thaliana (Mouse-ear cress) protein is Membrane magnesium transporter.